The primary structure comprises 396 residues: Ribosomal RNA large subunit methyltransferase I (396 aa).

One can recognise a PUA domain in the interval 2-79; the sequence is TSAVYLQAGR…EKEVIDQHFF (78 aa).

The protein belongs to the methyltransferase superfamily. RlmI family.

The protein resides in the cytoplasm. The catalysed reaction is cytidine(1962) in 23S rRNA + S-adenosyl-L-methionine = 5-methylcytidine(1962) in 23S rRNA + S-adenosyl-L-homocysteine + H(+). Specifically methylates the cytosine at position 1962 (m5C1962) of 23S rRNA. The chain is Ribosomal RNA large subunit methyltransferase I from Pseudoalteromonas translucida (strain TAC 125).